Consider the following 435-residue polypeptide: Hydrogenobyrinate a,c-diamide synthase (435 aa).

Residues 247–435 (RIALARDAAF…TGSFFHLIAG (189 aa)) form the GATase cobBQ-type domain. The Nucleophile role is filled by cysteine 329.

It belongs to the CobB/CbiA family. The cofactor is Mg(2+).

The catalysed reaction is hydrogenobyrinate + 2 L-glutamine + 2 ATP + 2 H2O = hydrogenobyrinate a,c-diamide + 2 L-glutamate + 2 ADP + 2 phosphate + 2 H(+). It functions in the pathway cofactor biosynthesis; adenosylcobalamin biosynthesis; cob(II)yrinate a,c-diamide from precorrin-2 (aerobic route): step 9/10. In terms of biological role, catalyzes the ATP-dependent amidation of the two carboxylate groups at positions a and c of hydrogenobyrinate, using either L-glutamine or ammonia as the nitrogen source. This chain is Hydrogenobyrinate a,c-diamide synthase, found in Rhodobacter capsulatus (strain ATCC BAA-309 / NBRC 16581 / SB1003).